Consider the following 489-residue polypeptide: Neuropeptide CCHamide-2 receptor (489 aa).

Residues 1–74 (MYASLMDVGQ…DRPETYIVTV (74 aa)) lie on the Extracellular side of the membrane. N-linked (GlcNAc...) asparagine glycosylation is found at Asn25 and Asn50. A helical membrane pass occupies residues 75–95 (LYTLIFIVGVLGNGTLVIIFF). Residues 96–107 (RHRSMRNIPNTY) are Cytoplasmic-facing. The helical transmembrane segment at 108 to 128 (ILSLALADLLVILVCVPVATI) threads the bilayer. Residues 129 to 143 (VYTQESWPFERNMCR) are Extracellular-facing. Cys142 and Cys225 are oxidised to a cystine. A helical membrane pass occupies residues 144-164 (ISEFFKDISIGVSVFTLTALS). At 165-184 (GERYCAIVNPLRKLQTKPLT) the chain is on the cytoplasmic side. Residues 185-205 (VFTAVMIWILAILLGMPSVLF) form a helical membrane-spanning segment. Residues 206-235 (SDIKSYPVFTATGNMTIEVCSPFRDPEYAK) lie on the Extracellular side of the membrane. Asn219 carries an N-linked (GlcNAc...) asparagine glycan. Residues 236–256 (FMVAGKALVYYLLPLSIIGAL) traverse the membrane as a helical segment. Over 257–293 (YIMMAKRLHMSARNMPGEQQSMQSRTQARARLHVARM) the chain is Cytoplasmic. The chain crosses the membrane as a helical span at residues 294–314 (VVAFVVVFFICFFPYHVFELW). Residues 315 to 333 (YHFYPTAEEDFDEFWNVLR) lie on the Extracellular side of the membrane. The chain crosses the membrane as a helical span at residues 334–354 (IVGFCTSFLNSCVNPVALYCV). The Cytoplasmic segment spans residues 355-489 (SGVFRQHFNR…NRYESGVMRY (135 aa)). The disordered stretch occupies residues 438-468 (SFHRQDSMPLQHGNAHGGGAGGGSSGLGAGG). Residues 452–468 (AHGGGAGGGSSGLGAGG) are compositionally biased toward gly residues.

Belongs to the G-protein coupled receptor 1 family. Highly expressed in larval brain. Also highly expressed in adult brain with very low levels in larval and adult gut.

It localises to the cell membrane. Functionally, receptor for the neuropeptide CCHamide-2. The polypeptide is Neuropeptide CCHamide-2 receptor (Drosophila melanogaster (Fruit fly)).